A 232-amino-acid polypeptide reads, in one-letter code: Putative N-acetylmannosamine-6-phosphate 2-epimerase (232 aa).

The protein belongs to the NanE family.

It carries out the reaction an N-acyl-D-glucosamine 6-phosphate = an N-acyl-D-mannosamine 6-phosphate. It participates in amino-sugar metabolism; N-acetylneuraminate degradation; D-fructose 6-phosphate from N-acetylneuraminate: step 3/5. Functionally, converts N-acetylmannosamine-6-phosphate (ManNAc-6-P) to N-acetylglucosamine-6-phosphate (GlcNAc-6-P). The polypeptide is Putative N-acetylmannosamine-6-phosphate 2-epimerase (Corynebacterium glutamicum (strain R)).